Reading from the N-terminus, the 454-residue chain is Nucleoprotein (454 aa).

Residues 1 to 62 (MSFVPGQENA…ATTQPNSGSV (62 aa)) are disordered. Residues 11 to 21 (GSRSSSGSRSG) are compositionally biased toward low complexity. Polar residues predominate over residues 49–61 (PKQTATTQPNSGS). The interval 56-197 (QPNSGSVVPH…GFYVEGSGRS (142 aa)) is RNA-binding. Residues 64-193 (PHYSWFSGIT…VLPQGFYVEG (130 aa)) enclose the CoV N NTD domain. 3 residues coordinate RNA: R109, R125, and R167. A Phosphoserine; by host modification is found at S170. Phosphothreonine; by host is present on T177. 3 disordered regions span residues 186–230 (PQGF…STVK), 271–292 (PRQK…KRGP), and 385–428 (GVDV…SREL). The span at 193–227 (GSGRSAPASRSGSRSQSRGPSNRARSSSNQRQPAS) shows a compositional bias: low complexity. S194 bears the Phosphoserine; by host mark. The CoV N CTD domain occupies 260–383 (AKEVRQKILN…ENLNAYQKEA (124 aa)). The tract at residues 267–384 (ILNKPRQKRT…NLNAYQKEAG (118 aa)) is dimerization. S390 and S425 each carry phosphoserine; by host. Residue T429 is modified to Phosphothreonine; by host.

It belongs to the betacoronavirus nucleocapsid protein family. In terms of assembly, homooligomer. Both monomeric and oligomeric forms interact with RNA. Interacts with protein M. Interacts with NSP3; this interaction serves to tether the genome to the newly translated replicase-transcriptase complex at a very early stage of infection. In terms of processing, ADP-ribosylated. The ADP-ribosylation is retained in the virion during infection. Phosphorylated on serine and threonine residues.

The protein resides in the virion. It is found in the host endoplasmic reticulum-Golgi intermediate compartment. The protein localises to the host Golgi apparatus. Packages the positive strand viral genome RNA into a helical ribonucleocapsid (RNP) and plays a fundamental role during virion assembly through its interactions with the viral genome and membrane protein M. Plays an important role in enhancing the efficiency of subgenomic viral RNA transcription as well as viral replication. The sequence is that of Nucleoprotein from Rat coronavirus (strain NJ) (RCV-NJ).